The chain runs to 204 residues: Glycerol-3-phosphate acyltransferase (204 aa).

Transmembrane regions (helical) follow at residues 8-28 (ILIF…CYIF), 53-73 (VPAA…VVIA), 81-101 (FITA…IFFG), 116-136 (FGFS…VAII), and 155-175 (VIFT…IIIL).

The protein belongs to the PlsY family. In terms of assembly, probably interacts with PlsX.

It localises to the cell inner membrane. The enzyme catalyses an acyl phosphate + sn-glycerol 3-phosphate = a 1-acyl-sn-glycero-3-phosphate + phosphate. It functions in the pathway lipid metabolism; phospholipid metabolism. In terms of biological role, catalyzes the transfer of an acyl group from acyl-phosphate (acyl-PO(4)) to glycerol-3-phosphate (G3P) to form lysophosphatidic acid (LPA). This enzyme utilizes acyl-phosphate as fatty acyl donor, but not acyl-CoA or acyl-ACP. The chain is Glycerol-3-phosphate acyltransferase from Francisella tularensis subsp. holarctica (strain FTNF002-00 / FTA).